A 307-amino-acid chain; its full sequence is Elongation factor Ts (307 aa).

Residues 80–83 (TDFV) are involved in Mg(2+) ion dislocation from EF-Tu.

Belongs to the EF-Ts family.

Its subcellular location is the cytoplasm. Its function is as follows. Associates with the EF-Tu.GDP complex and induces the exchange of GDP to GTP. It remains bound to the aminoacyl-tRNA.EF-Tu.GTP complex up to the GTP hydrolysis stage on the ribosome. The polypeptide is Elongation factor Ts (Azorhizobium caulinodans (strain ATCC 43989 / DSM 5975 / JCM 20966 / LMG 6465 / NBRC 14845 / NCIMB 13405 / ORS 571)).